A 325-amino-acid chain; its full sequence is Neural proliferation differentiation and control protein 1 (325 aa).

Positions 1–34 are cleaved as a signal peptide; that stretch reads MATPLPPPSPRHLRLLRLLLSGLVLGAALRGAAA. The tract at residues 138-175 is disordered; sequence QGLELGLPSTPGTPTPTPHTSLGSPVSSDPVHMSPLEP. A helical transmembrane segment spans residues 182 to 202; it reads GLALVLILAFCVAGAAALSVA. Residue Ser229 is modified to Phosphoserine. Residues 266-290 are disordered; sequence EPPKELDTASSDEENEDGDFTVYEC. Over residues 275–284 the composition is skewed to acidic residues; it reads SSDEENEDGD.

Belongs to the NPDC1/cab-1 family. Strongly expressed in adult brain; especially in hippocampus, frontal lobe and temporal lobe.

The protein localises to the membrane. Its function is as follows. Suppresses oncogenic transformation in neural and non-neural cells and down-regulates neural cell proliferation. Might be involved in transcriptional regulation. The sequence is that of Neural proliferation differentiation and control protein 1 (NPDC1) from Homo sapiens (Human).